The chain runs to 221 residues: Transcription factor bHLH126 (221 aa).

2 disordered regions span residues 1–46 (MDPY…KKLL) and 104–132 (RRDELSRETGQGYKSNPDPGKTGSDVGKS). Positions 42–94 (KKKLLHRDIERQRRQEMATLFATLRTHLPLKYIKGKRAVSDHVNGAVNFIKDT) constitute a bHLH domain.

In terms of assembly, homodimer.

The protein resides in the nucleus. This is Transcription factor bHLH126 (BHLH126) from Arabidopsis thaliana (Mouse-ear cress).